Reading from the N-terminus, the 68-residue chain is Beta-defensin 1 (68 aa).

Positions 1 to 21 (MRTSYLLLFTLCLLMSEMASG) are cleaved as a signal peptide. Residues 22-32 (DNFLTGLGHRS) constitute a propeptide that is removed on maturation. 3 disulfide bridges follow: Cys-37–Cys-66, Cys-44–Cys-59, and Cys-49–Cys-67.

The protein belongs to the beta-defensin family. Monomer. Homodimer.

Its subcellular location is the secreted. It localises to the membrane. Has bactericidal activity. May act as a ligand for C-C chemokine receptor CCR6. Positively regulates the sperm motility and bactericidal activity in a CCR6-dependent manner. Binds to CCR6 and triggers Ca2+ mobilization in the sperm which is important for its motility. The polypeptide is Beta-defensin 1 (DEFB1) (Presbytis melalophos (Mitred leaf monkey)).